Reading from the N-terminus, the 299-residue chain is MHSLATAAPVPTALAQVDREKIYQWINELSSPETRENALLELSKKRESVPDLAPMLWHSFGTIAALLQEIVNIYPSINPPTLTAHQSNRVCNALALLQCVASHPETRSAFLAAHIPLFLYPFLHTVSKTRPFEYLRLTSLGVIGALVKTDEQEVINFLLTTEIIPLCLRIMESGSELSKTVATFILQKILLDDTGLAYICQTYERFSHVAMILGKMVLQLSKEPSARLLKHVVRCYLRLSDNPRAREALRQCLPDQLKDTTFAQVLKDDTTTKRWLAQLVKNLQEGQVTDPRGIPLPPQ.

Met-1 carries the N-acetylmethionine modification.

Belongs to the CNOT9 family. As to quaternary structure, homodimer. Component of the CCR4-NOT complex; distinct complexes seem to exist that differ in the participation of probably mutually exclusive catalytic subunits. Interacts with MYB, ATF2, RARA, RARB, RARG, RXRA, RXRB and RXRG. Identified in a complex with ATF2 bound to target DNA. Interacts with NANOS2. Directly interacts with ZNF335.

Its subcellular location is the nucleus. It is found in the cytoplasm. The protein localises to the P-body. Its function is as follows. Component of the CCR4-NOT complex which is one of the major cellular mRNA deadenylases and is linked to various cellular processes including bulk mRNA degradation, miRNA-mediated repression, translational repression during translational initiation and general transcription regulation. Additional complex functions may be a consequence of its influence on mRNA expression. Involved in down-regulation of MYB- and JUN-dependent transcription. Enhances ligand-dependent transcriptional activity of nuclear hormone receptors. May play a role in cell differentiation. This is CCR4-NOT transcription complex subunit 9 from Bos taurus (Bovine).